We begin with the raw amino-acid sequence, 101 residues long: Urease subunit beta (101 aa).

This sequence belongs to the urease beta subunit family. Heterotrimer of UreA (gamma), UreB (beta) and UreC (alpha) subunits. Three heterotrimers associate to form the active enzyme.

It is found in the cytoplasm. The enzyme catalyses urea + 2 H2O + H(+) = hydrogencarbonate + 2 NH4(+). Its pathway is nitrogen metabolism; urea degradation; CO(2) and NH(3) from urea (urease route): step 1/1. In Nostoc punctiforme (strain ATCC 29133 / PCC 73102), this protein is Urease subunit beta.